A 169-amino-acid polypeptide reads, in one-letter code: ALK and LTK ligand 2a (169 aa).

Residues 1–25 (MRALRAPVLVMGLVLLICTAAQSDA) form the signal peptide. The tract at residues 45–68 (ENSADDESAQKTESAPEPKDTHHL) is disordered. Residues 52–67 (SAQKTESAPEPKDTHH) show a composition bias toward basic and acidic residues. 2 disulfides stabilise this stretch: Cys-130-Cys-166 and Cys-144-Cys-153.

This sequence belongs to the ALKAL family. As to quaternary structure, homodimer. As to expression, expressed at high level in the notochord and iridophore stripes of the trunk, as well as in the eye and swim bladder.

The protein localises to the secreted. Its subcellular location is the cell membrane. Its function is as follows. Cytokine that acts as a physiological ligand for receptor tyrosine kinases LTK and ALK. Required for neural crest cell differentiation and iridophore development during embryonic iridophore development and adult stripe development by acting as a receptor for LTK. This Danio rerio (Zebrafish) protein is ALK and LTK ligand 2a.